Reading from the N-terminus, the 298-residue chain is Mitochondrial 2-oxodicarboxylate carrier (298 aa).

3 Solcar repeats span residues 10–99, 106–195, and 204–293; these read HETC…YKKF, SPGL…VKDN, and LEFL…TYAW. 6 helical membrane passes run 16–36, 69–88, 112–132, 166–186, 204–224, and 276–296; these read VAAG…LDVV, FGFY…KRAV, PIAG…FEVV, GLNK…MTYF, LEFL…SVFN, and LGPG…WLQE.

It belongs to the mitochondrial carrier (TC 2.A.29) family. In terms of tissue distribution, widely expressed.

The protein resides in the mitochondrion inner membrane. The enzyme catalyses 2-oxoadipate(in) + 2-oxoglutarate(out) = 2-oxoadipate(out) + 2-oxoglutarate(in). It carries out the reaction hexanedioate(in) + 2-oxoglutarate(out) = hexanedioate(out) + 2-oxoglutarate(in). The catalysed reaction is L-2-aminoadipate(in) + 2-oxoglutarate(out) = L-2-aminoadipate(out) + 2-oxoglutarate(in). It catalyses the reaction glutarate(in) + 2-oxoglutarate(out) = glutarate(out) + 2-oxoglutarate(in). The enzyme catalyses 2-oxoheptanedioate(in) + 2-oxoglutarate(out) = 2-oxoheptanedioate(out) + 2-oxoglutarate(in). It carries out the reaction heptanedioate(in) + 2-oxoglutarate(out) = heptanedioate(out) + 2-oxoglutarate(in). The catalysed reaction is citrate(in) + 2-oxoglutarate(out) = citrate(out) + 2-oxoglutarate(in). Functionally, transports dicarboxylates across the inner membranes of mitochondria by a counter-exchange mechanism. Can transport 2-oxoadipate (2-oxohexanedioate), 2-oxoglutarate, adipate (hexanedioate), glutarate, and to a lesser extent, pimelate (heptanedioate), 2-oxopimelate (2-oxoheptanedioate), 2-aminoadipate (2-aminohexanedioate), oxaloacetate, and citrate. Plays a central role in catabolism of lysine, hydroxylysine, and tryptophan, by transporting common metabolite intermediates (such as 2-oxoadipate) into the mitochondria, where it is converted into acetyl-CoA and can enter the citric acid (TCA) cycle. This Rattus norvegicus (Rat) protein is Mitochondrial 2-oxodicarboxylate carrier (Slc25a21).